The following is a 309-amino-acid chain: Prepilin leader peptidase/N-methyltransferase (309 aa).

A helical transmembrane segment spans residues 35 to 55 (MQLAFAIVLGLVVGSFINVVV). Zn(2+)-binding residues include cysteine 96, cysteine 99, cysteine 121, and cysteine 124. The next 6 membrane-spanning stretches (helical) occupy residues 147–167 (LALF…AALL), 183–203 (LTLP…FASL), 207–227 (VIGA…FKLL), 230–250 (IEGI…WLGW), 253–273 (LPQV…VATW), and 288–308 (FLAA…LLLG).

This sequence belongs to the peptidase A24 family. Requires Zn(2+) as cofactor.

Its subcellular location is the cell inner membrane. It carries out the reaction Typically cleaves a -Gly-|-Phe- bond to release an N-terminal, basic peptide of 5-8 residues from type IV prepilin, and then N-methylates the new N-terminal amino group, the methyl donor being S-adenosyl-L-methionine.. In terms of biological role, plays an essential role in type IV pili and type II pseudopili formation by proteolytically removing the leader sequence from substrate proteins and subsequently monomethylating the alpha-amino group of the newly exposed N-terminal phenylalanine. The protein is Prepilin leader peptidase/N-methyltransferase (gspO) of Burkholderia pseudomallei (strain K96243).